We begin with the raw amino-acid sequence, 29 residues long: Glucagon (29 aa).

Residue Ser-2 is modified to Phosphoserine.

Belongs to the glucagon family.

Its subcellular location is the secreted. Its function is as follows. Glucagon plays a key role in glucose metabolism and homeostasis. Regulates blood glucose by increasing gluconeogenesis and decreasing glycolysis. In Chinchilla chinchilla (Short-tailed chinchilla), this protein is Glucagon (GCG).